We begin with the raw amino-acid sequence, 125 residues long: Ribosome-binding factor A (125 aa).

This sequence belongs to the RbfA family. As to quaternary structure, monomer. Binds 30S ribosomal subunits, but not 50S ribosomal subunits or 70S ribosomes.

It is found in the cytoplasm. One of several proteins that assist in the late maturation steps of the functional core of the 30S ribosomal subunit. Associates with free 30S ribosomal subunits (but not with 30S subunits that are part of 70S ribosomes or polysomes). Required for efficient processing of 16S rRNA. May interact with the 5'-terminal helix region of 16S rRNA. The chain is Ribosome-binding factor A from Kosmotoga olearia (strain ATCC BAA-1733 / DSM 21960 / TBF 19.5.1).